The chain runs to 503 residues: Aromatase (503 aa).

2 consecutive transmembrane segments (helical) span residues 19–39 (EVVP…LLVW) and 53–73 (FLGI…IGSA). 2 residues coordinate substrate: aspartate 309 and methionine 374. Cysteine 437 serves as a coordination point for heme.

This sequence belongs to the cytochrome P450 family. It depends on heme as a cofactor.

It localises to the endoplasmic reticulum membrane. Its subcellular location is the microsome membrane. The catalysed reaction is testosterone + 3 reduced [NADPH--hemoprotein reductase] + 3 O2 = 17beta-estradiol + formate + 3 oxidized [NADPH--hemoprotein reductase] + 4 H2O + 4 H(+). It catalyses the reaction androst-4-ene-3,17-dione + 3 reduced [NADPH--hemoprotein reductase] + 3 O2 = estrone + formate + 3 oxidized [NADPH--hemoprotein reductase] + 4 H2O + 4 H(+). The enzyme catalyses androst-4-ene-3,17-dione + reduced [NADPH--hemoprotein reductase] + O2 = 19-hydroxyandrost-4-ene-3,17-dione + oxidized [NADPH--hemoprotein reductase] + H2O + H(+). It carries out the reaction 19-hydroxyandrost-4-ene-3,17-dione + reduced [NADPH--hemoprotein reductase] + O2 = 19-oxo-androst-4-ene-3,17-dione + oxidized [NADPH--hemoprotein reductase] + 2 H2O + H(+). The catalysed reaction is 19-oxo-androst-4-ene-3,17-dione + reduced [NADPH--hemoprotein reductase] + O2 = estrone + formate + oxidized [NADPH--hemoprotein reductase] + H2O + 2 H(+). It catalyses the reaction estrone + reduced [NADPH--hemoprotein reductase] + O2 = 2-hydroxyestrone + oxidized [NADPH--hemoprotein reductase] + H2O + H(+). The enzyme catalyses 17beta-hydroxy-5alpha-androstan-3-one + reduced [NADPH--hemoprotein reductase] + O2 = 17beta,19-dihydroxy-3-oxo-5alpha-androstanone + oxidized [NADPH--hemoprotein reductase] + H2O + H(+). It carries out the reaction 17beta,19-dihydroxy-3-oxo-5alpha-androstanone + reduced [NADPH--hemoprotein reductase] + O2 = 17beta-hydroxy-3,19-dioxo-5alpha-androstanone + oxidized [NADPH--hemoprotein reductase] + 2 H2O + H(+). The catalysed reaction is 17beta-hydroxy-3,19-dioxo-5alpha-androstanone + reduced [NADPH--hemoprotein reductase] + O2 = 17beta-hydroxy-3-oxo-19-nor-5alpha-androst-1-ene + formate + oxidized [NADPH--hemoprotein reductase] + H2O + 2 H(+). It functions in the pathway steroid hormone biosynthesis. A cytochrome P450 monooxygenase that catalyzes the conversion of C19 androgens, androst-4-ene-3,17-dione (androstenedione) and testosterone to the C18 estrogens, estrone and estradiol, respectively. Catalyzes three successive oxidations of C19 androgens: two conventional oxidations at C19 yielding 19-hydroxy and 19-oxo/19-aldehyde derivatives, followed by a third oxidative aromatization step that involves C1-beta hydrogen abstraction combined with cleavage of the C10-C19 bond to yield a phenolic A ring and formic acid. Alternatively, the third oxidative reaction yields a 19-norsteroid and formic acid. Converts dihydrotestosterone to delta1,10-dehydro 19-nordihydrotestosterone and may play a role in homeostasis of this potent androgen. Also displays 2-hydroxylase activity toward estrone. Mechanistically, uses molecular oxygen inserting one oxygen atom into a substrate, and reducing the second into a water molecule, with two electrons provided by NADPH via cytochrome P450 reductase (CPR; NADPH-ferrihemoprotein reductase). The polypeptide is Aromatase (CYP19A1) (Bos taurus (Bovine)).